We begin with the raw amino-acid sequence, 137 residues long: uncharacterized protein (137 aa).

The signal sequence occupies residues 1-21 (MFNRRVLFLSVFSCAVFMLSG). Residue C22 is the site of N-palmitoyl cysteine attachment. C22 is lipidated: S-diacylglycerol cysteine.

The protein localises to the membrane. This is an uncharacterized protein from Escherichia coli (strain K12).